Reading from the N-terminus, the 624-residue chain is Plastin-2 (624 aa).

EF-hand domains lie at 9–44 (EEME…ANLP) and 49–84 (RVRE…LKSS). Ca(2+)-binding residues include aspartate 22, aspartate 24, asparagine 26, histidine 28, glutamate 33, aspartate 62, asparagine 64, aspartate 66, lysine 68, and glutamate 73. Calponin-homology (CH) domains are found at residues 118 to 234 (EEEK…KIGL), 262 to 373 (LSPE…NKYP), 392 to 501 (TREE…RRYT), and 513 to 621 (KIID…ARGM). Actin-binding regions lie at residues 118 to 373 (EEEK…NKYP) and 392 to 621 (TREE…ARGM).

In terms of assembly, monomer. In terms of tissue distribution, expressed by macrophages (at protein level).

The protein resides in the cytoplasm. The protein localises to the cytoskeleton. It is found in the cell junction. It localises to the cell projection. Its subcellular location is the ruffle membrane. Functionally, actin-binding protein. Plays a role in the activation of T-cells. This Danio rerio (Zebrafish) protein is Plastin-2.